We begin with the raw amino-acid sequence, 75 residues long: ATP synthase subunit c (75 aa).

A run of 2 helical transmembrane segments spans residues 13–33 and 54–74; these read LNVVGYGLAAIGPGIGLGILI and MFLGLAFVEVLALLGFVLAFI.

The protein belongs to the ATPase C chain family. In terms of assembly, F-type ATPases have 2 components, F(1) - the catalytic core - and F(0) - the membrane proton channel. F(1) has five subunits: alpha(3), beta(3), gamma(1), delta(1), epsilon(1). F(0) has three main subunits: a(1), b(2) and c(10-14). The alpha and beta chains form an alternating ring which encloses part of the gamma chain. F(1) is attached to F(0) by a central stalk formed by the gamma and epsilon chains, while a peripheral stalk is formed by the delta and b chains.

It is found in the cell membrane. F(1)F(0) ATP synthase produces ATP from ADP in the presence of a proton or sodium gradient. F-type ATPases consist of two structural domains, F(1) containing the extramembraneous catalytic core and F(0) containing the membrane proton channel, linked together by a central stalk and a peripheral stalk. During catalysis, ATP synthesis in the catalytic domain of F(1) is coupled via a rotary mechanism of the central stalk subunits to proton translocation. Functionally, key component of the F(0) channel; it plays a direct role in translocation across the membrane. A homomeric c-ring of between 10-14 subunits forms the central stalk rotor element with the F(1) delta and epsilon subunits. This chain is ATP synthase subunit c, found in Bifidobacterium adolescentis (strain ATCC 15703 / DSM 20083 / NCTC 11814 / E194a).